A 517-amino-acid chain; its full sequence is Putative transporter C543.05c (517 aa).

11 helical membrane-spanning segments follow: residues 68–88, 93–113, 121–141, 155–175, 186–206, 217–237, 269–289, 311–331, 377–397, 403–423, and 449–471; these read SFGV…FALL, LCIV…YDIM, FPFL…IAIA, CEIF…QVLC, FLSI…DTVG, ILLL…FQHI, IPVG…ILFY, GFHW…ILGI, SNFI…LLVL, CVLA…NGIT, and RVVW…ITQV.

This sequence belongs to the anion exchanger (TC 2.A.31) family.

Its subcellular location is the vacuole membrane. This Schizosaccharomyces pombe (strain 972 / ATCC 24843) (Fission yeast) protein is Putative transporter C543.05c.